Consider the following 410-residue polypeptide: 2-oxoglutarate-dependent dioxygenase AOP3 (410 aa).

The region spanning 258–355 (GNASVGAKEA…RYAAALFSYP (98 aa)) is the Fe2OG dioxygenase domain. Fe cation-binding residues include His278, Asp280, and His335. Arg346 serves as a coordination point for 2-oxoglutarate.

It belongs to the iron/ascorbate-dependent oxidoreductase family. Fe(2+) serves as cofactor.

In terms of biological role, 2-oxoglutarate-dependent dioxygenase involved in glucosinolates biosynthesis. Catalyzes the conversion of methylsulfinylalkyl glucosinolates to hydroxyalkyl glucosinolates. This Arabidopsis thaliana (Mouse-ear cress) protein is 2-oxoglutarate-dependent dioxygenase AOP3 (AOP3).